We begin with the raw amino-acid sequence, 858 residues long: MAAKGAHGSYLKVESELERCRAEGHWDRMPELVRQLQTLSMPGGGGNRRGSPSAAFTFPDTDDFGKLLLAEALLEQCLKENHAKIKDSMPLLEKNEPKMSEAKNYLSSILNHGRLSPQYMCEAMLILGKLHYVEGSYRDAISMYARAGIDDMSMENKPLYQMRLLSEAFVIKGLSLERLPNSIASRFRLTEREEEVITCFERASWIAQVFLQELEKTTNNSTSRHLKGCHPLDYELTYFLEAALQSAYVKNLKKGNIVKGMRELREVLRTVETKATQNFKVMAAKHLAGVLLHSLSEECYWSPLSHPLPEFMGKEESSFATQALRKPHLYEGDNLYCPKDNIEEALLLLLISESMATRDVVLSRVPEQEEDRTVSLQNAAAIYDLLSITLGRRGQYVMLSECLERAMKFAFGEFHLWYQVALSMVACGKSAYAVSLLRECVKLRPSDPTVPLMAAKVCIGSLRWLEEAEHFAMMVISLGEEAGEFLPKGYLALGLTYSLQATDATLKSKQDELHRKALQTLERAQQLAPSDPQVILYVSLQLALVRQISSAMEQLQEALKVRKDDAHALHLLALLFSAQKHHQHALDVVNMAITEHPENFNLMFTKVKLEQVLKGPEEALVTCRQVLRLWQTLYSFSQLGGLEKDGSFGEGLTMKKQSGMHLTLPDAHDADSGSRRASSIAASRLEEAMSELTMPSSVLKQGPMQLWTTLEQIWLQAAELFMEQQHLKEAGFCIQEAAGLFPTSHSVLYMRGRLAEVKGNLEEAKQLYKEALTVNPDGVRIMHSLGLMLSRLGHKSLAQKVLRDAVERQSTCHEAWQGLGEVLQAQGQNEAAVDCFLTALELEASSPVLPFSIIPREL.

Phosphoserine is present on serine 51. TPR repeat units follow at residues cysteine 121 to lysine 157, glutamate 177 to phenylalanine 210, phenylalanine 414 to aspartate 447, tyrosine 497 to aspartate 531, glutamine 533 to aspartate 565, and alanine 566 to asparagine 599. Residue serine 182 is modified to Phosphoserine. A phosphoserine mark is found at serine 647, serine 678, serine 679, and serine 690. Threonine 693 carries the phosphothreonine modification. TPR repeat units follow at residues histidine 745 to glycine 778, arginine 780 to cysteine 812, and histidine 813 to serine 846.

In terms of assembly, component of a phosphatidylinositol 4-kinase (PI4K) complex, composed of PI4KA, EFR3 (EFR3A or EFR3B), TTC7 (TTC7A or TTC7B) and HYCC (HYCC1 or HYCC2). Interacts with PI4KA. Interaction with PI4KA is direct. Interacts with EFR3 (EFR3A or EFR3B), interaction is direct. Interacts with HYCC (HYCC1 or HYCC2), interaction is direct. Association with the PI4K complex is strongly reduced by TMEM150A. Expressed in epithelial cells of the intestine, thymus, and pancreas (at protein level).

It localises to the cytoplasm. The protein localises to the cell membrane. Its function is as follows. Component of a complex required to localize phosphatidylinositol 4-kinase (PI4K) to the plasma membrane. The complex acts as a regulator of phosphatidylinositol 4-phosphate (PtdIns(4)P) synthesis. In the complex, plays a central role in bridging PI4KA to EFR3B and HYCC1, via direct interactions. This chain is Tetratricopeptide repeat protein 7A, found in Homo sapiens (Human).